A 159-amino-acid polypeptide reads, in one-letter code: LOB domain-containing protein 25 (159 aa).

The 102-residue stretch at 38–139 (SPCAACKFLR…RELEETNADL (102 aa)) folds into the LOB domain.

It belongs to the LOB domain-containing protein family. In terms of tissue distribution, expressed in young shoots, roots, stems, leaves and flowers.

In Arabidopsis thaliana (Mouse-ear cress), this protein is LOB domain-containing protein 25 (LBD25).